The following is an 87-amino-acid chain: Protein ORF3 (87 aa).

Positions 58–87 (GALNNAPREPSAPPLSQTLSPRQVLARYQM) are disordered. The PTAP/PSAP motif motif lies at 67–70 (PSAP).

Belongs to the hepevirus ORF3 protein family. Palmitoylated in the N-terminus.

It localises to the host endoplasmic reticulum membrane. The protein resides in the host cytoplasm. Its subcellular location is the host cytoskeleton. It is found in the virion. The protein localises to the host cell membrane. Its function is as follows. Small multifunctional phosphoprotein involved in virion morphogenesis, egress and counteracting host innate immunity. The protein is Protein ORF3 of Avian hepatitis E virus (isolate Chicken/California/Meng) (AHEV).